Consider the following 232-residue polypeptide: Large ribosomal subunit protein uL1 (232 aa).

The protein belongs to the universal ribosomal protein uL1 family. In terms of assembly, part of the 50S ribosomal subunit.

In terms of biological role, binds directly to 23S rRNA. The L1 stalk is quite mobile in the ribosome, and is involved in E site tRNA release. Functionally, protein L1 is also a translational repressor protein, it controls the translation of the L11 operon by binding to its mRNA. The sequence is that of Large ribosomal subunit protein uL1 from Rhizorhabdus wittichii (strain DSM 6014 / CCUG 31198 / JCM 15750 / NBRC 105917 / EY 4224 / RW1) (Sphingomonas wittichii).